An 887-amino-acid chain; its full sequence is MQPTDPTKFTDKAWEAIVKSQDVAREYRSQYLETEHVMIALLREEGLGQVILERSDIDTEWVLKRLMDFARQQPRVPAGSELYCGRSLDALLDEANRLRQEEEDQFISIEHLLLAFVGDRRIGQRLFRALNCDRQQLAATVKAIRGAQKVLDQNPENKYAALEKYGRDLTEAARQGKLDPVIGRDEEIRRVIQVLSRRTKNNPVLIGEPGVGKTAIAEGLAQRIINGDVPESLKNRRLISLDLGSLVAGAKFRGDFEDRLKAVLHEVTHSEGQIVLFIDELHTVVGAGANQNSSMDASNLLKPMLARGELRCIGATTLDEYRKYIEKDAALERRFQQVYIGQPSVEDTISILRGLKDRYEIHHNVKITDSALVAAAMLSDRYISDRYLPDKAIDLVDEAAAKLKMEITTKPAELEALERRLRQLEMERLSLKQEESLPLSQAPLQATRDRLQRIEAEIAQLQPRQQAMQARWQAEKELLERINSLKEEEDQVKLQIEQAERDYNLNKAAQLKYGRLETLQRELEATEAQLLELQAAGGTFLRDQVTEADIAEIVAKWTGIPLQKLMASERQKLLQLEQVLHQRVIGQSDAVAAVAAAIRRARAGMKDPARPIGSFLFMGPTGVGKTELARALAEALFDDENALVRIDMSEYMEKHAVSRMIGAPPGYVGFDSGGQLTEAIRRRPYAVVLFDEVEKAHPEVFNVLLQVLDDGRITDSQGRTVDFRNTVIIMTSNLGSEHILDLAADDSRYEEMRQRVLQSAQKYFRPEFLNRIDDVILFHGLGRTELAQIAQIQLRRVEKLLADQKIHLRLTPAALDHLVAVGFDPVYGARPLKRAIQRELENPLAVKLLEEVFTPGDTILVDLVGSELTFRAVSPAGTGDRDTVSAS.

The Clp R domain maps to 6-147 (PTKFTDKAWE…AATVKAIRGA (142 aa)). 2 repeat regions span residues 9 to 73 (FTDK…ARQQ) and 84 to 147 (CGRS…IRGA). The tract at residues 160-342 (AALEKYGRDL…RRFQQVYIGQ (183 aa)) is NBD1. Position 207-214 (207-214 (GEPGVGKT)) interacts with ATP. The segment at 343-559 (PSVEDTISIL…IAEIVAKWTG (217 aa)) is linker. Residues 393-535 (IDLVDEAAAK…TEAQLLELQA (143 aa)) adopt a coiled-coil conformation. The interval 569–780 (ERQKLLQLEQ…RIDDVILFHG (212 aa)) is NBD2. 619–626 (GPTGVGKT) contributes to the ATP binding site. The C-terminal stretch occupies residues 781-887 (LGRTELAQIA…TGDRDTVSAS (107 aa)).

This sequence belongs to the ClpA/ClpB family. In terms of assembly, homohexamer. The oligomerization is ATP-dependent.

The protein localises to the cytoplasm. Functionally, part of a stress-induced multi-chaperone system, it is involved in the recovery of the cell from heat-induced damage, in cooperation with DnaK, DnaJ and GrpE. Acts before DnaK, in the processing of protein aggregates. Protein binding stimulates the ATPase activity; ATP hydrolysis unfolds the denatured protein aggregates, which probably helps expose new hydrophobic binding sites on the surface of ClpB-bound aggregates, contributing to the solubilization and refolding of denatured protein aggregates by DnaK. The chain is Chaperone protein ClpB 2 (clpB2) from Thermosynechococcus vestitus (strain NIES-2133 / IAM M-273 / BP-1).